We begin with the raw amino-acid sequence, 169 residues long: MEIIQKFGLEAKLFLFQLINFLIIVFILKKFLFAPLKKILDERKRKIEQSLQDAENAKIALENASEKKKNILAKAKSSADTLMATVKVSIKETKEKAVIEAKQRSEQIIDEAKQKAATEFESMNKKIGKISVDISGKVMSKVLSDLFTETEKQKLMSRALEKIDENIKN.

The helical transmembrane segment at L13 to F33 threads the bilayer.

This sequence belongs to the ATPase B chain family. F-type ATPases have 2 components, F(1) - the catalytic core - and F(0) - the membrane proton channel. F(1) has five subunits: alpha(3), beta(3), gamma(1), delta(1), epsilon(1). F(0) has three main subunits: a(1), b(2) and c(10-14). The alpha and beta chains form an alternating ring which encloses part of the gamma chain. F(1) is attached to F(0) by a central stalk formed by the gamma and epsilon chains, while a peripheral stalk is formed by the delta and b chains.

The protein resides in the cell inner membrane. Functionally, f(1)F(0) ATP synthase produces ATP from ADP in the presence of a proton or sodium gradient. F-type ATPases consist of two structural domains, F(1) containing the extramembraneous catalytic core and F(0) containing the membrane proton channel, linked together by a central stalk and a peripheral stalk. During catalysis, ATP synthesis in the catalytic domain of F(1) is coupled via a rotary mechanism of the central stalk subunits to proton translocation. Component of the F(0) channel, it forms part of the peripheral stalk, linking F(1) to F(0). This is ATP synthase subunit b from Endomicrobium trichonymphae.